The chain runs to 167 residues: Dimethylamine corrinoid protein 3 (167 aa).

Positions 1–44 (MNEVGVRFERGKLFLPHVMMAADAMTAGVNALKDLMPEGSASSK) constitute a B12-binding N-terminal domain. The B12-binding domain occupies 45-167 (MGVIVNGTVE…AVTKAKELLA (123 aa)). His-58 is a binding site for methylcob(III)alamin.

Belongs to the methylamine corrinoid protein family.

It functions in the pathway one-carbon metabolism; methanogenesis from dimethylamine. In terms of biological role, acts as a methyl group carrier between MtbB and MtbA. This is Dimethylamine corrinoid protein 3 (mtbC3) from Methanosarcina mazei (strain ATCC BAA-159 / DSM 3647 / Goe1 / Go1 / JCM 11833 / OCM 88) (Methanosarcina frisia).